The sequence spans 62 residues: Double zinc ribbon protein TK0111 (62 aa).

Positions 13, 16, 31, 34, 42, 45, 54, and 57 each coordinate Zn(2+).

In terms of assembly, crystallized in association with 70S ribosomes. The cofactor is Zn(2+).

In Thermococcus kodakarensis (strain ATCC BAA-918 / JCM 12380 / KOD1) (Pyrococcus kodakaraensis (strain KOD1)), this protein is Double zinc ribbon protein TK0111.